The following is a 376-amino-acid chain: Putative dihydroorotase (376 aa).

2 residues coordinate Zn(2+): His-35 and His-37. Residues 37-39 (HVR) and Asn-66 each bind substrate. Zn(2+) contacts are provided by Asp-114, His-138, and His-187. A substrate-binding site is contributed by Asn-230. Asp-257 provides a ligand contact to Zn(2+). The active site involves Asp-257. Substrate-binding positions include His-261 and 273–274 (YG).

Belongs to the metallo-dependent hydrolases superfamily. DHOase family. Class I DHOase subfamily. Zn(2+) serves as cofactor.

The catalysed reaction is (S)-dihydroorotate + H2O = N-carbamoyl-L-aspartate + H(+). It functions in the pathway pyrimidine metabolism; UMP biosynthesis via de novo pathway; (S)-dihydroorotate from bicarbonate: step 3/3. Catalyzes the reversible cyclization of carbamoyl aspartate to dihydroorotate. This Thermotoga maritima (strain ATCC 43589 / DSM 3109 / JCM 10099 / NBRC 100826 / MSB8) protein is Putative dihydroorotase (pyrC).